The following is a 327-amino-acid chain: Sideroflexin FSF1 (327 aa).

Position 2 is an N-acetylalanine (A2). 4 helical membrane passes run 98 to 118 (NLVVTVGMLTPGLGTAGTVFW), 143 to 163 (SQLLTNYAAAVTASCGVALGL), 179 to 199 (LILGRLVPFAAVVSAGIVNVF), and 272 to 292 (ANLGLISVTMFSALPFALGIF).

It belongs to the sideroflexin family.

Its subcellular location is the mitochondrion membrane. Its function is as follows. Mitochondrial amino-acid transporter that mediates transport of serine into mitochondria. The protein is Sideroflexin FSF1 of Saccharomyces cerevisiae (strain ATCC 204508 / S288c) (Baker's yeast).